A 102-amino-acid chain; its full sequence is Small ribosomal subunit protein uS10 (102 aa).

It belongs to the universal ribosomal protein uS10 family. As to quaternary structure, part of the 30S ribosomal subunit.

Its function is as follows. Involved in the binding of tRNA to the ribosomes. This chain is Small ribosomal subunit protein uS10, found in Pseudothermotoga lettingae (strain ATCC BAA-301 / DSM 14385 / NBRC 107922 / TMO) (Thermotoga lettingae).